The following is a 420-amino-acid chain: Diphosphomevalonate decarboxylase 2 (420 aa).

25 to 28 is a (R)-5-diphosphomevalonate binding site; it reads YWGK. A Peroxisomal targeting signal PTS2 motif is present at residues 42–50; the sequence is SVTLDPDHL. Residues Arg80, 163-168, and Thr219 contribute to the (R)-5-diphosphomevalonate site; that span reads SGSACR.

This sequence belongs to the diphosphomevalonate decarboxylase family. As to quaternary structure, homodimer.

Its subcellular location is the peroxisome. It catalyses the reaction (R)-5-diphosphomevalonate + ATP = isopentenyl diphosphate + ADP + phosphate + CO2. It functions in the pathway isoprenoid biosynthesis; isopentenyl diphosphate biosynthesis via mevalonate pathway; isopentenyl diphosphate from (R)-mevalonate: step 3/3. Performs the first committed step in the biosynthesis of isoprene-containing compounds such as sterols and terpenoids. Component of the triterpenes (e.g. ginsenosides or panaxosides) and phytosterols biosynthetic pathways. Promotes the accumulation of stigmasterol and beta-sitosterol. The protein is Diphosphomevalonate decarboxylase 2 of Panax ginseng (Korean ginseng).